Here is a 388-residue protein sequence, read N- to C-terminus: Succinate--CoA ligase [ADP-forming] subunit beta (388 aa).

One can recognise an ATP-grasp domain in the interval 9 to 244; that stretch reads KQLFARYGLP…QSQEDPREAQ (236 aa). Residues K46, 53–55, E99, T102, and E107 each bind ATP; that span reads GRG. The Mg(2+) site is built by N199 and D213. Substrate-binding positions include N264 and 321–323; that span reads GIV.

The protein belongs to the succinate/malate CoA ligase beta subunit family. In terms of assembly, heterotetramer of two alpha and two beta subunits. Mg(2+) is required as a cofactor.

The catalysed reaction is succinate + ATP + CoA = succinyl-CoA + ADP + phosphate. The enzyme catalyses GTP + succinate + CoA = succinyl-CoA + GDP + phosphate. The protein operates within carbohydrate metabolism; tricarboxylic acid cycle; succinate from succinyl-CoA (ligase route): step 1/1. Succinyl-CoA synthetase functions in the citric acid cycle (TCA), coupling the hydrolysis of succinyl-CoA to the synthesis of either ATP or GTP and thus represents the only step of substrate-level phosphorylation in the TCA. The beta subunit provides nucleotide specificity of the enzyme and binds the substrate succinate, while the binding sites for coenzyme A and phosphate are found in the alpha subunit. The protein is Succinate--CoA ligase [ADP-forming] subunit beta of Escherichia coli O139:H28 (strain E24377A / ETEC).